The primary structure comprises 137 residues: Peptide methionine sulfoxide reductase MsrB (137 aa).

The MsrB domain maps to 7-129 (PTENIEKLTD…NSASLNFVDD (123 aa)). The Zn(2+) site is built by Cys46, Cys49, Cys95, and Cys98. Cys118 functions as the Nucleophile in the catalytic mechanism.

Belongs to the MsrB Met sulfoxide reductase family. Zn(2+) is required as a cofactor.

The catalysed reaction is L-methionyl-[protein] + [thioredoxin]-disulfide + H2O = L-methionyl-(R)-S-oxide-[protein] + [thioredoxin]-dithiol. This is Peptide methionine sulfoxide reductase MsrB from Yersinia enterocolitica serotype O:8 / biotype 1B (strain NCTC 13174 / 8081).